We begin with the raw amino-acid sequence, 240 residues long: Small ribosomal subunit protein uS2 (240 aa).

The protein belongs to the universal ribosomal protein uS2 family.

This is Small ribosomal subunit protein uS2 from Wigglesworthia glossinidia brevipalpis.